The following is a 1041-amino-acid chain: Histone deacetylase complex subunit SAP130-B (1041 aa).

Disordered stretches follow at residues M1–V62, K111–P131, T572–S592, T614–A769, and V806–R852. Residues V18–Q30 show a composition bias toward polar residues. Positions E33–S42 are enriched in basic and acidic residues. Low complexity predominate over residues V576 to S592. Positions T614 to R641 are enriched in polar residues. The span at P707–A728 shows a compositional bias: low complexity.

The protein belongs to the SAP130 family.

The protein resides in the nucleus. In terms of biological role, acts as a transcriptional repressor. The sequence is that of Histone deacetylase complex subunit SAP130-B (sap130-b) from Xenopus laevis (African clawed frog).